The following is a 212-amino-acid chain: Octanoyltransferase (212 aa).

The region spanning 33–212 (GTAPELVWLL…ATFPEVFGAD (180 aa)) is the BPL/LPL catalytic domain. Residues 72 to 79 (RGGQYTYH), 144 to 146 (AIG), and 157 to 159 (GIA) each bind substrate. Catalysis depends on Cys175, which acts as the Acyl-thioester intermediate.

This sequence belongs to the LipB family.

The protein resides in the cytoplasm. The catalysed reaction is octanoyl-[ACP] + L-lysyl-[protein] = N(6)-octanoyl-L-lysyl-[protein] + holo-[ACP] + H(+). Its pathway is protein modification; protein lipoylation via endogenous pathway; protein N(6)-(lipoyl)lysine from octanoyl-[acyl-carrier-protein]: step 1/2. Catalyzes the transfer of endogenously produced octanoic acid from octanoyl-acyl-carrier-protein onto the lipoyl domains of lipoate-dependent enzymes. Lipoyl-ACP can also act as a substrate although octanoyl-ACP is likely to be the physiological substrate. This is Octanoyltransferase from Paramagnetospirillum magneticum (strain ATCC 700264 / AMB-1) (Magnetospirillum magneticum).